Consider the following 273-residue polypeptide: NADPH-dependent 7-cyano-7-deazaguanine reductase (273 aa).

81-83 contributes to the substrate binding site; it reads VES. An NADPH-binding site is contributed by 83–84; the sequence is SK. Catalysis depends on Cys179, which acts as the Thioimide intermediate. The active-site Proton donor is Asp186. A substrate-binding site is contributed by 218 to 219; the sequence is AE. 247–248 is an NADPH binding site; the sequence is RG.

The protein belongs to the GTP cyclohydrolase I family. QueF type 2 subfamily. As to quaternary structure, homodimer.

It is found in the cytoplasm. The enzyme catalyses 7-aminomethyl-7-carbaguanine + 2 NADP(+) = 7-cyano-7-deazaguanine + 2 NADPH + 3 H(+). Its pathway is tRNA modification; tRNA-queuosine biosynthesis. Its function is as follows. Catalyzes the NADPH-dependent reduction of 7-cyano-7-deazaguanine (preQ0) to 7-aminomethyl-7-deazaguanine (preQ1). The sequence is that of NADPH-dependent 7-cyano-7-deazaguanine reductase from Rickettsia bellii (strain OSU 85-389).